A 188-amino-acid chain; its full sequence is Large ribosomal subunit protein eL18 (188 aa).

The segment at 151–188 is disordered; it reads HFGPAPGVPHSHTKPLVRSKGRKFERARGRRKSCGYKK. Composition is skewed to basic residues over residues 161-171 and 178-188; these read SHTKPLVRSKG and RGRRKSCGYKK.

It belongs to the eukaryotic ribosomal protein eL18 family.

It is found in the cytoplasm. The protein is Large ribosomal subunit protein eL18 (RpL18) of Lysiphlebus testaceipes (Greenbugs aphid parastoid).